Consider the following 327-residue polypeptide: Undecaprenyl-phosphate 4-deoxy-4-formamido-L-arabinose transferase (327 aa).

The next 2 helical transmembrane spans lie at 236 to 256 and 270 to 290; these read LSVFGSIIAVLGFTLSVLLVV and VFMLFAVLFMFIGAQFVAMGL.

The protein belongs to the glycosyltransferase 2 family.

The protein resides in the cell inner membrane. The catalysed reaction is UDP-4-deoxy-4-formamido-beta-L-arabinose + di-trans,octa-cis-undecaprenyl phosphate = 4-deoxy-4-formamido-alpha-L-arabinopyranosyl di-trans,octa-cis-undecaprenyl phosphate + UDP. It functions in the pathway glycolipid biosynthesis; 4-amino-4-deoxy-alpha-L-arabinose undecaprenyl phosphate biosynthesis; 4-amino-4-deoxy-alpha-L-arabinose undecaprenyl phosphate from UDP-4-deoxy-4-formamido-beta-L-arabinose and undecaprenyl phosphate: step 1/2. Its pathway is bacterial outer membrane biogenesis; lipopolysaccharide biosynthesis. Its function is as follows. Catalyzes the transfer of 4-deoxy-4-formamido-L-arabinose from UDP to undecaprenyl phosphate. The modified arabinose is attached to lipid A and is required for resistance to polymyxin and cationic antimicrobial peptides. This is Undecaprenyl-phosphate 4-deoxy-4-formamido-L-arabinose transferase from Enterobacter sp. (strain 638).